The primary structure comprises 398 residues: Cytochrome b (398 aa).

A helical membrane pass occupies residues 45-65; sequence LGSIAGIALVIQIITGVILAM. 2 residues coordinate heme b: His-95 and His-109. A run of 9 helical transmembrane segments spans residues 96–116, 129–149, 164–184, 192–212, 245–265, 277–297, 304–324, 339–359, and 366–386; these read AVGASMFFAAIYLHIARGLYY, IGIIIFLIMMATAFMGYVLPW, FSAIPLVGEPIVIWLWGGFSV, FFALHYLFPFIIVVLVILHLV, FVGFGVYFIIFAYFIFYAPNY, PLVTPAHIVPEWYFLPFYAIL, LGGVFLMFGSIVVLFLLPWLD, IAFWIFMADCLFLGYLGSKPV, and ISRFAVCYYFCHFLLVLPLIG. The heme b site is built by His-196 and His-210.

This sequence belongs to the cytochrome b family. The main subunits of complex b-c1 are: cytochrome b, cytochrome c1 and the Rieske protein. Heme b is required as a cofactor.

Its subcellular location is the cell membrane. Its function is as follows. Component of the ubiquinol-cytochrome c reductase complex (complex III or cytochrome b-c1 complex), which is a respiratory chain that generates an electrochemical potential coupled to ATP synthesis. This chain is Cytochrome b (petB), found in Rickettsia prowazekii (strain Madrid E).